We begin with the raw amino-acid sequence, 1279 residues long: MYKKLFTKKFISFVMSLLLVLTAAFSSMPFHNVYAADNASVVANIVGDFQDQLGDSNWNIDSNITIMQYVGNGLYEFTTPTQLKAGSYQYKVALNHSWNGGGVPSQGNLTLNLTNDSYVTFWFDYNTQSVTDSTKYTPISNDKLPRLVGTIQSAIGAGKDWDPGTSTAIMIDDNFDNVYSYTAHIPKGDYQYKVTLGNTWAENYGANGVQDGSNIQLSVANDADITFFYDANTHNIWTNYSPTLTGLDNNIYYDDLKHDTHDPFFRNPFGAIKVGQTVTLRIQAKNHDLESARISYWDDINKTRTELPMTRIGESPDGNYEYWEIKLSFDHPTRIWYYFILKDGTKTAYYGDNDDQLGGLGKATDTVNKDFELTVYDKNFDTNDWMKGAVMYQIFPDRFYNGDTSNDHAKTLSRGNDPIEFHNDWNDLPDNPNNAGTPGYTGDGIWSNDFFGGDLKGIDDKLDYLKGLGVSVIYLNPIFESPSNHKYDTADYTKIDEMFGTTQDFEKLMSDAHAKGINIILDGVFNHTSDDSIYFNRYGKYPDLGAYQDWKDGNQSLSPYGDWYTINSDGTYECWWGYDSLPVIKSLNGSEYNVTSWANFIINDKNAISKYWLNPDENLNDGADGWRLDVENEVAHDFWTHFRDAINTVKPEAPMIAENWGDASLDLLGDSFNSVMNYQFRNDIIDFLIGQSFDDGNGQHNPIDAAKLDQRLMSIYERYPLPAFYSTMNLLGSHDTMSILTVFGYNSADPNENSDAAKRLAEQKLKLATILQMGYPGMADIYYGDEAGVSGGKDPDDRRTFPWGNEDTALQDFFKNVSSIRNNNQVLKTGDLETLYAQNDVYAIGRRIINGKDAFGNSYPDSAAIVAINRSNSDQQITIDTTKFLRDGVAFKDLINGDKSYTINGGQITINIPAMSGVMLISDDGQDLTAPQVPSNVVATSGNGKVDLSWSQSDGATGYNIYRSSVEGGLYEKIASNVTGTTFEDTNVTNGLKYVYAISAVDELGNESEMSIDTVAYPAYPIGWVGNLTQVVDNHVISVSNPTEDIYAEVWADGLTNSTGQGPNMIAQLGYKYVGGTVNDSVYGSVYNSVYGVDDSDFTWVNAQYVGDIGNNDQYKASLHLINRSMGYLMRFSDNQGQSWTTTDTLSFYVVPSDDLIKPTAPILNQPGVESSRVSLTWSPSTDNVGIYNYEIYRSDGGTFNKIATVSNEVYNYVDTSVINGTTYSYKVVAADPSFNRTESNVVTIKPDVVPIKVTFNVTVPDYTPNSVNLAGTFPNATW.

Residues 1–35 form the signal peptide; that stretch reads MYKKLFTKKFISFVMSLLLVLTAAFSSMPFHNVYA. Residues Asp248, Asn250, Asp288, Asp343, Asn401, Asp403, Asn406, Asp407, Gly452, and Asp454 each contribute to the Ca(2+) site. Residues His527 and Arg627 each contribute to the substrate site. Residue Asp629 is the Nucleophile of the active site. The active-site Proton donor is Glu658. Residues 734–735, Asp794, and Arg798 contribute to the substrate site; that span reads HD. 2 Fibronectin type-III domains span residues 930–1022 and 1158–1252; these read APQV…AYPI and KPTA…VVPI.

The protein belongs to the glycosyl hydrolase 13 family. Ca(2+) serves as cofactor.

It catalyses the reaction Endohydrolysis of (1-&gt;4)-alpha-D-glucosidic linkages in polysaccharides containing three or more (1-&gt;4)-alpha-linked D-glucose units.. The catalysed reaction is Hydrolysis of (1-&gt;6)-alpha-D-glucosidic linkages in pullulan, amylopectin and glycogen, and in the alpha- and beta-limit dextrins of amylopectin and glycogen.. In Thermoanaerobacterium saccharolyticum, this protein is Amylopullulanase (apu).